Here is a 456-residue protein sequence, read N- to C-terminus: RuvB-like helicase 1 (456 aa).

Residue 71–78 (GGAGTGKT) participates in ATP binding.

It belongs to the RuvB family. In terms of assembly, may form heterododecamers with RVB2. Component of the SWR1 chromatin remodeling complex, the INO80 chromatin remodeling complex, and of the R2TP complex.

The protein resides in the nucleus. It catalyses the reaction ATP + H2O = ADP + phosphate + H(+). Functionally, DNA helicase which participates in several chromatin remodeling complexes, including the SWR1 and the INO80 complexes. The SWR1 complex mediates the ATP-dependent exchange of histone H2A for the H2A variant HZT1 leading to transcriptional regulation of selected genes by chromatin remodeling. The INO80 complex remodels chromatin by shifting nucleosomes and is involved in DNA repair. Also involved in pre-rRNA processing. The polypeptide is RuvB-like helicase 1 (rvb1) (Schizosaccharomyces pombe (strain 972 / ATCC 24843) (Fission yeast)).